Consider the following 610-residue polypeptide: Myosin light chain kinase 2, skeletal/cardiac muscle (610 aa).

2 disordered regions span residues 1-168 (MATE…HSPS) and 196-240 (VSET…DTSQ). An N-acetylalanine modification is found at alanine 2. Basic and acidic residues-rich tracts occupy residues 32 to 63 (SEKE…KKNP) and 70 to 82 (KTPE…KKGD). Gly residues predominate over residues 94–109 (SGEGDGGGGPAEGGTG). Residues 141–157 (GEAKAGKKAAECREAGR) are compositionally biased toward basic and acidic residues. Phosphoserine is present on residues serine 160, serine 166, and serine 168. The Protein kinase domain occupies 299–554 (MNSKEALGGG…AEQCLAHPWL (256 aa)). ATP-binding positions include 305 to 313 (LGGGKFGAV) and lysine 328. The active-site Proton acceptor is aspartate 420. At threonine 459 the chain carries Phosphothreonine. Residues 588–600 (IAVSAANRFKKIS) form a calmodulin-binding region.

It belongs to the protein kinase superfamily. CAMK Ser/Thr protein kinase family. As to quaternary structure, may interact with centrin.

The protein localises to the cytoplasm. The catalysed reaction is L-seryl-[myosin light chain] + ATP = O-phospho-L-seryl-[myosin light chain] + ADP + H(+). It catalyses the reaction L-threonyl-[myosin light chain] + ATP = O-phospho-L-threonyl-[myosin light chain] + ADP + H(+). Implicated in the level of global muscle contraction and cardiac function. Phosphorylates a specific serine in the N-terminus of a myosin light chain. The polypeptide is Myosin light chain kinase 2, skeletal/cardiac muscle (Mylk2) (Rattus norvegicus (Rat)).